The primary structure comprises 312 residues: Methionyl-tRNA formyltransferase (312 aa).

109–112 is a binding site for (6S)-5,6,7,8-tetrahydrofolate; it reads SLLP.

This sequence belongs to the Fmt family.

It carries out the reaction L-methionyl-tRNA(fMet) + (6R)-10-formyltetrahydrofolate = N-formyl-L-methionyl-tRNA(fMet) + (6S)-5,6,7,8-tetrahydrofolate + H(+). Its function is as follows. Attaches a formyl group to the free amino group of methionyl-tRNA(fMet). The formyl group appears to play a dual role in the initiator identity of N-formylmethionyl-tRNA by promoting its recognition by IF2 and preventing the misappropriation of this tRNA by the elongation apparatus. This Caulobacter sp. (strain K31) protein is Methionyl-tRNA formyltransferase.